The sequence spans 419 residues: UDP-N-acetylglucosamine 1-carboxyvinyltransferase (419 aa).

22 to 23 contributes to the phosphoenolpyruvate binding site; the sequence is KN. Arg-95 lines the UDP-N-acetyl-alpha-D-glucosamine pocket. Cys-119 serves as the catalytic Proton donor. Cys-119 carries the post-translational modification 2-(S-cysteinyl)pyruvic acid O-phosphothioketal. UDP-N-acetyl-alpha-D-glucosamine-binding positions include 164–167, Asp-308, and Ile-330; that span reads KVSV.

This sequence belongs to the EPSP synthase family. MurA subfamily.

It is found in the cytoplasm. It carries out the reaction phosphoenolpyruvate + UDP-N-acetyl-alpha-D-glucosamine = UDP-N-acetyl-3-O-(1-carboxyvinyl)-alpha-D-glucosamine + phosphate. Its pathway is cell wall biogenesis; peptidoglycan biosynthesis. Its function is as follows. Cell wall formation. Adds enolpyruvyl to UDP-N-acetylglucosamine. The sequence is that of UDP-N-acetylglucosamine 1-carboxyvinyltransferase from Rickettsia massiliae (strain Mtu5).